Consider the following 228-residue polypeptide: General odorant-binding protein 71 (228 aa).

The signal sequence occupies residues 1–20 (MCGAIVLLLLVGTSPAPVEG). The interval 50–131 (TMGEWGQRDR…GNSSSSSSST (82 aa)) is disordered. The segment covering 55-72 (GQRDRNGEEQQMMRDYGR) has biased composition (basic and acidic residues). The segment covering 83 to 99 (GGQTSGSSSSGSAGEHS) has biased composition (low complexity). Gly residues predominate over residues 111-120 (AGQGGNGTRS). The span at 121–131 (GGNSSSSSSST) shows a compositional bias: low complexity. Intrachain disulfides connect C138–C199 and C185–C208.

It belongs to the PBP/GOBP family.

The protein resides in the secreted. In terms of biological role, present in the aqueous fluid surrounding olfactory sensory dendrites and are thought to aid in the capture and transport of hydrophobic odorants into and through this fluid. The protein is General odorant-binding protein 71 (Obp71) of Anopheles gambiae (African malaria mosquito).